A 347-amino-acid chain; its full sequence is DNA-directed RNA polymerase subunit alpha (347 aa).

The tract at residues M1–E230 is alpha N-terminal domain (alpha-NTD). The segment at M247–E347 is alpha C-terminal domain (alpha-CTD). Residues G320 to E347 form a disordered region. The span at G336–E347 shows a compositional bias: acidic residues.

This sequence belongs to the RNA polymerase alpha chain family. Homodimer. The RNAP catalytic core consists of 2 alpha, 1 beta, 1 beta' and 1 omega subunit. When a sigma factor is associated with the core the holoenzyme is formed, which can initiate transcription.

It carries out the reaction RNA(n) + a ribonucleoside 5'-triphosphate = RNA(n+1) + diphosphate. Functionally, DNA-dependent RNA polymerase catalyzes the transcription of DNA into RNA using the four ribonucleoside triphosphates as substrates. The sequence is that of DNA-directed RNA polymerase subunit alpha from Solibacter usitatus (strain Ellin6076).